A 147-amino-acid chain; its full sequence is Endoribonuclease YbeY (147 aa).

Zn(2+) is bound by residues His109, His113, and His119.

This sequence belongs to the endoribonuclease YbeY family. Zn(2+) is required as a cofactor.

The protein resides in the cytoplasm. Its function is as follows. Single strand-specific metallo-endoribonuclease involved in late-stage 70S ribosome quality control and in maturation of the 3' terminus of the 16S rRNA. This Thiobacillus denitrificans (strain ATCC 25259 / T1) protein is Endoribonuclease YbeY.